The primary structure comprises 1026 residues: Multidrug resistance protein MdtC (1026 aa).

11 consecutive transmembrane segments (helical) span residues 15–35 (ILIA…LPVA), 333–353 (EVEE…FLFL), 360–380 (LIPA…MYLC), 387–407 (LSLM…IVVL), 431–451 (VGFT…PLLL), 463–483 (FAVT…TLTP), 528–548 (LVGV…IAIP), 853–873 (LILI…LYES), 897–917 (LFNA…IGIV), 953–973 (PIMM…LSGG), and 984–1004 (ITIV…TPVV).

The protein belongs to the resistance-nodulation-cell division (RND) (TC 2.A.6) family. MdtC subfamily. Part of a tripartite efflux system composed of MdtA, MdtB and MdtC. MdtC forms a heteromultimer with MdtB.

It localises to the cell inner membrane. The polypeptide is Multidrug resistance protein MdtC (Salmonella paratyphi A (strain AKU_12601)).